The following is a 64-amino-acid chain: Small ribosomal subunit protein bS21 (64 aa).

The protein belongs to the bacterial ribosomal protein bS21 family.

The polypeptide is Small ribosomal subunit protein bS21 (Oenococcus oeni (strain ATCC BAA-331 / PSU-1)).